Consider the following 439-residue polypeptide: L-tryptophan decarboxylase (439 aa).

Belongs to the phosphatidylserine decarboxylase family.

The enzyme catalyses L-tryptophan + H(+) = tryptamine + CO2. It functions in the pathway secondary metabolite biosynthesis. Functionally, L-tryptophan decarboxylase; part of the gene cluster that mediates the biosynthesis of psilocybin, a psychotropic tryptamine-derived natural product. The first step in the pathway is the decarboxylation of L-tryptophan to tryptamine by the decarboxylase psiD. PsiD does not decarboxylate phenylalanine, tyrosine, or 5-hydroxy- L -tryptophan (5-HTP). 4-hydroxy-L-tryptophan is accepted as substrate by psiD as well. The cytochrome P450 monooxygenase psiH then converts tryptamine to 4-hydroxytryptamine. The kinase psiK catalyzes the 4-O-phosphorylation step by converting 4-hydroxytryptamine into norbaeocystin. The methyltransferase psiM then catalyzes iterative methyl transfer to the amino group of norbaeocystin to yield psilocybin via a monomethylated intermediate, baeocystin. 4-hydroxy-6-methyl-l-tryptophancan also be converted the decarboxylase PsiD, kinase PsiK, and methyltransferase PsiM into respectively 6-methyl-norbaeocystin, 6-methylbaeocystin, and 6-methylpsilocybin. The chain is L-tryptophan decarboxylase from Psilocybe cyanescens.